Reading from the N-terminus, the 203-residue chain is Dephospho-CoA kinase (203 aa).

Residues Arg6–Gly203 form the DPCK domain. Ala14 to Val19 provides a ligand contact to ATP.

It belongs to the CoaE family.

The protein localises to the cytoplasm. The catalysed reaction is 3'-dephospho-CoA + ATP = ADP + CoA + H(+). It participates in cofactor biosynthesis; coenzyme A biosynthesis; CoA from (R)-pantothenate: step 5/5. Catalyzes the phosphorylation of the 3'-hydroxyl group of dephosphocoenzyme A to form coenzyme A. This chain is Dephospho-CoA kinase, found in Thermosynechococcus vestitus (strain NIES-2133 / IAM M-273 / BP-1).